The following is a 355-amino-acid chain: Probable cinnamyl alcohol dehydrogenase (355 aa).

Cys47 serves as a coordination point for Zn(2+). Position 49 (Ser49) interacts with NADP(+). Zn(2+) contacts are provided by His69, Glu70, Cys100, Cys103, Cys106, Cys114, and Cys162. NADP(+) is bound by residues Thr166, 187 to 192 (GLGGVG), 210 to 215 (SSSDKK), Thr250, Gly274, and 297 to 299 (SFI).

The protein belongs to the zinc-containing alcohol dehydrogenase family. In terms of assembly, homodimer. It depends on Zn(2+) as a cofactor.

The enzyme catalyses (E)-cinnamyl alcohol + NADP(+) = (E)-cinnamaldehyde + NADPH + H(+). It carries out the reaction (E)-coniferol + NADP(+) = (E)-coniferaldehyde + NADPH + H(+). It catalyses the reaction (E)-sinapyl alcohol + NADP(+) = (E)-sinapaldehyde + NADPH + H(+). The catalysed reaction is (E)-4-coumaroyl alcohol + NADP(+) = (E)-4-coumaraldehyde + NADPH + H(+). The enzyme catalyses (E)-caffeyl alcohol + NADP(+) = (E)-caffeyl aldehyde + NADPH + H(+). Its pathway is aromatic compound metabolism; phenylpropanoid biosynthesis. Functionally, involved in lignin biosynthesis. Catalyzes the final step specific for the production of lignin monomers. Catalyzes the NADPH-dependent reduction of coniferaldehyde, 5-hydroxyconiferaldehyde, sinapaldehyde, 4-coumaraldehyde and caffeyl aldehyde to their respective alcohols. The chain is Probable cinnamyl alcohol dehydrogenase (CAD1) from Eucalyptus botryoides (Southern mahogany).